A 38-amino-acid polypeptide reads, in one-letter code: VAKCTEESGGKYFVFCCYKPTRICYMNEQKCESTCIGK.

Post-translationally, disulfide bonds. As to expression, expressed in flowers but not in leaves, seeds or roots (at protein level).

Its function is as follows. Antimicrobial peptide. Active against fungal species B.cinerea (IC(50)=5.8 uM) and A.niger (IC(50)=5.6 uM) but not against F.oxysporum, F.graminearum, B.sorokinina and P.debaryanum at concentrations below 10 uM. Active against bacterial species P.syringae, B.subtilis and X.campestris. The polypeptide is Antimicrobial peptide 1 (Taraxacum officinale (Common dandelion)).